A 265-amino-acid chain; its full sequence is Phosphonates import ATP-binding protein PhnC 1 (265 aa).

The region spanning 3–247 (LRLSAIELRH…HLDTLYANEQ (245 aa)) is the ABC transporter domain. 36–43 (GPSGAGKT) serves as a coordination point for ATP.

It belongs to the ABC transporter superfamily. Phosphonates importer (TC 3.A.1.9.1) family. As to quaternary structure, the complex is composed of two ATP-binding proteins (PhnC), two transmembrane proteins (PhnE) and a solute-binding protein (PhnD).

Its subcellular location is the cell inner membrane. The catalysed reaction is phosphonate(out) + ATP + H2O = phosphonate(in) + ADP + phosphate + H(+). In terms of biological role, part of the ABC transporter complex PhnCDE involved in phosphonates import. Responsible for energy coupling to the transport system. The sequence is that of Phosphonates import ATP-binding protein PhnC 1 from Pseudomonas syringae pv. syringae (strain B728a).